The primary structure comprises 401 residues: Probable E3 ubiquitin-protein ligase RHC2A (401 aa).

Residues Thr-41–Ser-93 are disordered. Over residues Ala-76–Ser-93 the composition is skewed to polar residues. The RING-type; atypical zinc finger occupies Cys-201–Arg-242.

It catalyses the reaction S-ubiquitinyl-[E2 ubiquitin-conjugating enzyme]-L-cysteine + [acceptor protein]-L-lysine = [E2 ubiquitin-conjugating enzyme]-L-cysteine + N(6)-ubiquitinyl-[acceptor protein]-L-lysine.. It participates in protein modification; protein ubiquitination. Probable E3 ubiquitin-protein ligase that may possess E3 ubiquitin ligase activity in vitro. The protein is Probable E3 ubiquitin-protein ligase RHC2A of Arabidopsis thaliana (Mouse-ear cress).